The primary structure comprises 378 residues: Wnt inhibitory factor 1 (378 aa).

An N-terminal signal peptide occupies residues M1–Y28. One can recognise a WIF domain in the interval M36–C175. N-linked (GlcNAc...) asparagine glycosylation occurs at N86. Intrachain disulfides connect C138-C175, C180-C190, C184-C196, C212-C222, C216-C228, and C230-C239. 5 EGF-like domains span residues Q176–V205, E208–E240, N243–E272, E272–S304, and K305–N336. N-linked (GlcNAc...) asparagine glycosylation occurs at N243. 9 disulfides stabilise this stretch: C244-C254, C248-C260, C262-C271, C276-C286, C280-C292, C294-C303, C308-C318, C312-C324, and C326-C335. The segment at V343–V378 is disordered. Residues E367–V378 show a composition bias toward polar residues.

As to expression, highly expressed in unsegmented paraxial mesoderm.

The protein resides in the secreted. Binds to WNT proteins and inhibits their activities. May be involved in mesoderm segmentation. The chain is Wnt inhibitory factor 1 (wif1) from Danio rerio (Zebrafish).